A 185-amino-acid polypeptide reads, in one-letter code: Class I hydrophobin SC6 (185 aa).

Residues 1–17 (MVSRVLALISVAMLVGA) form the signal peptide. The disordered stretch occupies residues 70 to 104 (HIPEVTGSSTEEATSSSTWSGASSKPTDSAPTQCN). The span at 75–93 (TGSSTEEATSSSTWSGASS) shows a compositional bias: low complexity. Over residues 94–104 (KPTDSAPTQCN) the composition is skewed to polar residues. Disulfide bonds link Cys103/Cys164, Cys110/Cys158, Cys111/Cys144, and Cys165/Cys178.

The protein belongs to the fungal hydrophobin family. In terms of assembly, self-assembles to form functional amyloid fibrils called rodlets. Self-assembly into fibrillar rodlets occurs spontaneously at hydrophobic:hydrophilic interfaces and the rodlets further associate laterally to form amphipathic monolayers.

It is found in the secreted. Its subcellular location is the cell wall. Its function is as follows. Aerial growth, conidiation, and dispersal of filamentous fungi in the environment rely upon a capability of their secreting small amphipathic proteins called hydrophobins (HPBs) with low sequence identity. Class I can self-assemble into an outermost layer of rodlet bundles on aerial cell surfaces, conferring cellular hydrophobicity that supports fungal growth, development and dispersal; whereas Class II form highly ordered films at water-air interfaces through intermolecular interactions but contribute nothing to the rodlet structure. SC6 is a dikaryon-specific class I hydrophobin that contributes to the formation of aerial hyphae and fruiting bodies. The sequence is that of Class I hydrophobin SC6 from Schizophyllum commune (Split gill fungus).